A 652-amino-acid chain; its full sequence is MTGELPRGRRWSARTTWASRLNVPLRAFLHTETGSARVLLAAAVVALAWANLDESSYESLWGNTLSVQLGGWQLSHDLRYWVNSGLMTFFFLVIGLEVRRDFDLGELRERRRLTLPLLAGIGGILVPIAIYLAFNAGRPTAVGWGVVMATDTALALGMLAVLGPRFSDRLRNFLLTVAVVDDLIVIAVLAIAYPEHPSPTALFVAAGIFALVLLIRAAGGRWGPGYLLLGVAAWLAVSESGVDPVVVGLVMGLLTYAYAPARTELQRAADRFRLFREQPSPQLARSVRAGLSAALSPNDRLQHIYHPWASYLIVPLFALANVGVVVDGELLARAATSPVTLGVLFAYVVGKPAGIVIASMLVARLSHNRFRAPVGWAAIIGVGTVSGIGFTIALLIATHALHGPALDEAKIGILVATVGASLTTWLVFRLAARLPPARRARALLGVSEGIIDLMVPVDPDRDHVRGPREAPVTVVEYGDFECPYCGQAEPAVRELLTDFTNIRYVWRHLPLTDVHPYAQVAAEAAEAAGDQGAFWEMHDLLLAHQGELRPADLLGYAERLDLDLDRFREHLADRRGAVRIAEDVDGADLSSVSGTPTFFVNGRRHHGSYNIEALSAAVTSAFAGTRLRPRDDREPDRRREVGSEQPDEEPGT.

Residues 1–427 form a na(+)/H(+) antiporter NhaA region; the sequence is MTGELPRGRR…VGASLTTWLV (427 aa). Helical transmembrane passes span 27 to 47, 78 to 98, 114 to 134, 142 to 162, 173 to 193, 200 to 220, 227 to 247, 312 to 332, 343 to 363, 376 to 396, and 411 to 431; these read AFLH…VVAL, LRYW…GLEV, TLPL…YLAF, VGWG…LAVL, FLLT…AIAY, TALF…AAGG, LLLG…PVVV, LIVP…ELLA, VLFA…MLVA, WAAI…ALLI, and IGIL…FRLA. Residues 428 to 623 enclose the Thioredoxin domain; sequence FRLAARLPPA…LSAAVTSAFA (196 aa). A disordered region spans residues 626–652; that stretch reads RLRPRDDREPDRRREVGSEQPDEEPGT. A compositionally biased stretch (basic and acidic residues) spans 628–642; the sequence is RPRDDREPDRRREVG.

It in the N-terminal section; belongs to the NhaA Na(+)/H(+) (TC 2.A.33) antiporter family.

The protein localises to the cell membrane. The enzyme catalyses Na(+)(in) + 2 H(+)(out) = Na(+)(out) + 2 H(+)(in). Its function is as follows. Na(+)/H(+) antiporter that extrudes sodium in exchange for external protons. In Salinispora arenicola (strain CNS-205), this protein is Na(+)/H(+) antiporter NhaA 1.